The sequence spans 393 residues: tRNA(Met) cytidine acetate ligase (393 aa).

3 residues coordinate ATP: Gly81, Asn142, and Arg167.

Belongs to the TmcAL family.

The protein localises to the cytoplasm. The catalysed reaction is cytidine(34) in elongator tRNA(Met) + acetate + ATP = N(4)-acetylcytidine(34) in elongator tRNA(Met) + AMP + diphosphate. Catalyzes the formation of N(4)-acetylcytidine (ac(4)C) at the wobble position of elongator tRNA(Met), using acetate and ATP as substrates. First activates an acetate ion to form acetyladenylate (Ac-AMP) and then transfers the acetyl group to tRNA to form ac(4)C34. The protein is tRNA(Met) cytidine acetate ligase of Bacillus cereus (strain AH820).